The sequence spans 297 residues: rRNA 2'-O-methyltransferase fibrillarin (297 aa).

Residues 1–56 (MRGGFGRGGGGRGGSRGGRGGFGRGGGRGGGRGGGRGGGRGGGRGGGRGGGRGGAG) form a disordered region. Asymmetric dimethylarginine occurs at positions 2, 7, 12, 16, 19, 24, 28, 32, 36, 40, 44, 48, and 52. S-adenosyl-L-methionine is bound by residues 149 to 150 (TT), 168 to 169 (EF), 192 to 193 (DA), and 212 to 215 (DVAQ).

This sequence belongs to the methyltransferase superfamily. Fibrillarin family. In terms of assembly, component of box C/D small nucleolar ribonucleoprotein (snoRNP) particles. It is associated with the U3, U8 and U13 small nuclear RNAs. By homology to other fibrillarins, some or all of the N-terminal domain arginines are modified to asymmetric dimethylarginine (DMA).

It localises to the nucleus. Its subcellular location is the nucleolus. It catalyses the reaction L-glutaminyl-[histone H2A] + S-adenosyl-L-methionine = N(5)-methyl-L-glutaminyl-[histone H2A] + S-adenosyl-L-homocysteine + H(+). Its function is as follows. S-adenosyl-L-methionine-dependent methyltransferase that has the ability to methylate both RNAs and proteins. Involved in pre-rRNA processing. Utilizes the methyl donor S-adenosyl-L-methionine to catalyze the site-specific 2'-hydroxyl methylation of ribose moieties in pre-ribosomal RNA. Site specificity is provided by a guide RNA that base pairs with the substrate. Methylation occurs at a characteristic distance from the sequence involved in base pairing with the guide RNA. Also acts as a protein methyltransferase by mediating methylation of 'Gln-105' of histone H2A (H2AQ105me), a modification that impairs binding of the FACT complex and is specifically present at 35S ribosomal DNA locus. This Leishmania major protein is rRNA 2'-O-methyltransferase fibrillarin.